A 665-amino-acid chain; its full sequence is MASEAPHASAPDCAPASSDIPQQDGGSTNGHGHDLKGHGFFALALGSVGVVFGDIGTSPLYAFKEALAAASHDGVTRSEIFGVVSLALWALILIVTIKYVVFIMRADNKGEGGVLSLMALAQHAMGKRTTLVFVLGVAGAALFYGDAVITPAMSVLSAVEGLRTIPALEHGVTNEVVLLIATVMLLGLFFIQSRGTASVGKLFGPVCAVWFGVMFSLGLMNLAANPGILMAISPYYAVEFLAEHGLTGFIVLGAVFLTVTGVEALTADMGHFGRWPIQAAWLFFVLPCLAMNYLGQGAFALTTLETAQAAGKAMPELNWFFEMAPEALRLPLVLLAGAATVIASQAVITGAFSLTQQAIQLGLLPRLDVRRTSETQSGQIFVPQLNTMLLLGVLAIMFTFQTSSALAHAYGLAVTGTMIVTTCMAFIVMRKLWKWSMPMALLFLVPFLALDITFLSANALRFFSGGWLPVLIGAALFTIMATWVRGSQILTDKTRRDSLPVADLMDILRARAPHRAPGTAIFLTSDPDMTPVALMHNLKHNKVLHERNVILTVRTAETPRVSEEERVKIEKVNDDFKKVVVNYGFMESPNIPKALAVCRKQGLKFDIMATSFFLGRRSIVPSANSGMPLWQDRLFIYLMRNAANPTDFFKIPPGRVVELGAQVTV.

The span at 1 to 18 (MASEAPHASAPDCAPASS) shows a compositional bias: low complexity. The disordered stretch occupies residues 1 to 31 (MASEAPHASAPDCAPASSDIPQQDGGSTNGH). 12 helical membrane passes run 40–60 (FFAL…TSPL), 83–103 (VVSL…VVFI), 131–151 (LVFV…VITP), 171–191 (GVTN…LFFI), 202–222 (LFGP…LMNL), 245–265 (GLTG…VEAL), 281–301 (WLFF…AFAL), 332–352 (LVLL…TGAF), 380–400 (IFVP…MFTF), 409–429 (AYGL…FIVM), 435–455 (WSMP…ITFL), and 462–482 (FFSG…IMAT).

This sequence belongs to the HAK/KUP transporter (TC 2.A.72) family.

It is found in the cell inner membrane. The enzyme catalyses K(+)(in) + H(+)(in) = K(+)(out) + H(+)(out). In terms of biological role, transport of potassium into the cell. Likely operates as a K(+):H(+) symporter. This is Probable potassium transport system protein Kup from Caulobacter vibrioides (strain ATCC 19089 / CIP 103742 / CB 15) (Caulobacter crescentus).